The primary structure comprises 432 residues: Casein kinase II subunit alpha-4, chloroplastic (432 aa).

Residues 1 to 55 constitute a chloroplast transit peptide; sequence MALRPCTGFTISSLRNASAANNNLFSLLSFSSSSPAKRNLLLSSLQDNLRRFASS. The tract at residues 63–83 is disordered; it reads LRNQQQQHQQQQQSRVKEKSE. Positions 66 to 75 are enriched in low complexity; it reads QQQQHQQQQQ. The 286-residue stretch at 132-417 folds into the Protein kinase domain; the sequence is YEVVRKVGRG…AKEAMAHPYF (286 aa). Residues 138–146 and K161 contribute to the ATP site; that span reads VGRGKYSEV. D249 serves as the catalytic Proton acceptor.

The protein belongs to the protein kinase superfamily. Ser/Thr protein kinase family. CK2 subfamily. In terms of assembly, tetramer of two alpha and two beta chains. Expressed in root tips, lateral root primordia, cotyledons, leaf primordia, sepals, filaments, stigma, and anthers.

It localises to the plastid. The protein resides in the chloroplast. The catalysed reaction is L-seryl-[protein] + ATP = O-phospho-L-seryl-[protein] + ADP + H(+). It carries out the reaction L-threonyl-[protein] + ATP = O-phospho-L-threonyl-[protein] + ADP + H(+). In terms of biological role, casein kinases are operationally defined by their preferential utilization of acidic proteins such as caseins as substrates. The alpha chain contains the catalytic site. Involved in the regulation of various developmental processes. Involved in the regulation of plant growth and flowering time. Involved in retrograde signaling in plant responses to abscisic acid (ABA) and heat stress. May act as an enhancing factor in abiotic stress signaling through modulation of the expression of some molecular players in retrograde signaling. Phosphorylates RuBisCo activase (RCA) at Thr-78. This Arabidopsis thaliana (Mouse-ear cress) protein is Casein kinase II subunit alpha-4, chloroplastic.